A 558-amino-acid polypeptide reads, in one-letter code: FRIGIDA-like protein 3 (558 aa).

The stretch at 9 to 102 (SLMDSTSSKI…ALERLQKKRD (94 aa)) forms a coiled coil. Over residues 454-463 (AKADKKRATE) the composition is skewed to basic and acidic residues. The disordered stretch occupies residues 454–494 (AKADKKRATEPMKPQPKRPRGAQPRVTDNNNNINNNKTGYG).

Belongs to the Frigida family.

In Arabidopsis thaliana (Mouse-ear cress), this protein is FRIGIDA-like protein 3 (FRL3).